We begin with the raw amino-acid sequence, 212 residues long: uncharacterized protein (212 aa).

Residues glycine 53, glutamate 74, and aspartate 97 each contribute to the S-adenosyl-L-methionine site.

It belongs to the methyltransferase superfamily. YrrT family.

Its function is as follows. Could be a S-adenosyl-L-methionine-dependent methyltransferase. This is an uncharacterized protein from Bacillus mycoides (strain KBAB4) (Bacillus weihenstephanensis).